The chain runs to 214 residues: Cytochrome b (214 aa).

A run of 4 helical transmembrane segments spans residues 31–51 (FGSM…FLAI), 75–96 (WIMQ…YIHI), 111–131 (WLSG…GYVL), and 176–196 (FFAL…IHII). Residues His81 and His95 each contribute to the heme b site. His180 and His194 together coordinate heme b. His199 is a binding site for a ubiquinone.

The protein belongs to the cytochrome b family. As to quaternary structure, the cytochrome bc1 complex contains 3 respiratory subunits (MT-CYB, CYC1 and UQCRFS1), 2 core proteins (UQCRC1 and UQCRC2) and probably 6 low-molecular weight proteins. It depends on heme b as a cofactor.

It is found in the mitochondrion inner membrane. Functionally, component of the ubiquinol-cytochrome c reductase complex (complex III or cytochrome b-c1 complex) that is part of the mitochondrial respiratory chain. The b-c1 complex mediates electron transfer from ubiquinol to cytochrome c. Contributes to the generation of a proton gradient across the mitochondrial membrane that is then used for ATP synthesis. The sequence is that of Cytochrome b (MT-CYB) from Atractaspis micropholis (Mole viper).